A 516-amino-acid chain; its full sequence is Prolyl 4-hydroxylase subunit alpha-1 (516 aa).

A glycan (N-linked (GlcNAc...) asparagine) is linked at Asn-97. The TPR repeat unit spans residues 189–222 (VYILDYLSYAVYQQGDLSKAMMLTKRLLELDPEH). Residue Asn-243 is glycosylated (N-linked (GlcNAc...) asparagine). The 109-residue stretch at 393 to 501 (TAEELQVANY…KWVSNKWLHE (109 aa)) folds into the Fe2OG dioxygenase domain. Fe cation is bound by residues His-411, Asp-413, and His-482. Lys-492 serves as a coordination point for 2-oxoglutarate.

It belongs to the P4HA family. As to quaternary structure, heterotetramer of two alpha chains and two beta chains (the beta chain is the multi-functional PDI). Fe(2+) is required as a cofactor. It depends on L-ascorbate as a cofactor.

Its subcellular location is the endoplasmic reticulum lumen. The catalysed reaction is L-prolyl-[collagen] + 2-oxoglutarate + O2 = trans-4-hydroxy-L-prolyl-[collagen] + succinate + CO2. Its function is as follows. Catalyzes the post-translational formation of 4-hydroxyproline in -Xaa-Pro-Gly- sequences in collagens and other proteins. The protein is Prolyl 4-hydroxylase subunit alpha-1 (P4HA1) of Gallus gallus (Chicken).